The sequence spans 284 residues: Formamidopyrimidine-DNA glycosylase (284 aa).

Residue Pro-2 is the Schiff-base intermediate with DNA of the active site. Glu-3 acts as the Proton donor in catalysis. The active-site Proton donor; for beta-elimination activity is the Lys-61. DNA-binding residues include His-95, Arg-115, and Arg-157. The segment at 243–277 adopts an FPG-type zinc-finger fold; the sequence is AVYGRAGQPCRRCGTAIVREPFMNRSSFRCPACQP. Arg-267 serves as the catalytic Proton donor; for delta-elimination activity.

Belongs to the FPG family. As to quaternary structure, monomer. The cofactor is Zn(2+).

It catalyses the reaction Hydrolysis of DNA containing ring-opened 7-methylguanine residues, releasing 2,6-diamino-4-hydroxy-5-(N-methyl)formamidopyrimidine.. The enzyme catalyses 2'-deoxyribonucleotide-(2'-deoxyribose 5'-phosphate)-2'-deoxyribonucleotide-DNA = a 3'-end 2'-deoxyribonucleotide-(2,3-dehydro-2,3-deoxyribose 5'-phosphate)-DNA + a 5'-end 5'-phospho-2'-deoxyribonucleoside-DNA + H(+). Its function is as follows. Involved in base excision repair of DNA damaged by oxidation or by mutagenic agents. Acts as a DNA glycosylase that recognizes and removes damaged bases. Has a preference for oxidized purines, such as 7,8-dihydro-8-oxoguanine (8-oxoG). Has AP (apurinic/apyrimidinic) lyase activity and introduces nicks in the DNA strand. Cleaves the DNA backbone by beta-delta elimination to generate a single-strand break at the site of the removed base with both 3'- and 5'-phosphates. The chain is Formamidopyrimidine-DNA glycosylase from Acidothermus cellulolyticus (strain ATCC 43068 / DSM 8971 / 11B).